Consider the following 190-residue polypeptide: dTTP/UTP pyrophosphatase (190 aa).

D71 (proton acceptor) is an active-site residue.

This sequence belongs to the Maf family. YhdE subfamily. Requires a divalent metal cation as cofactor.

The protein resides in the cytoplasm. The catalysed reaction is dTTP + H2O = dTMP + diphosphate + H(+). The enzyme catalyses UTP + H2O = UMP + diphosphate + H(+). Its function is as follows. Nucleoside triphosphate pyrophosphatase that hydrolyzes dTTP and UTP. May have a dual role in cell division arrest and in preventing the incorporation of modified nucleotides into cellular nucleic acids. The protein is dTTP/UTP pyrophosphatase of Xanthomonas axonopodis pv. citri (strain 306).